The following is a 113-amino-acid chain: Protein USP2 (113 aa).

An N-terminal signal peptide occupies residues 1–18 (MKITMFFAALSAASGVFA). A run of 6 repeats spans residues 32–37 (IGAGVG), 40–45 (IGAGVG), 46–49 (SYGY), 50–53 (PYGA), 59–65 (LQLLPLR), and 69–75 (LRRLPLR). The 2 X 6 AA repeats stretch occupies residues 32 to 45 (IGAGVGIGIGAGVG). Positions 46-53 (SYGYPYGA) are 2 X 4 AA approximate tandem repeats. The interval 59–75 (LQLLPLRWLPLRRLPLR) is 2 X 7 AA approximate repeats.

The protein localises to the secreted. The protein is Protein USP2 (USP2) of Puccinia graminis (Black stem rust fungus).